A 434-amino-acid polypeptide reads, in one-letter code: Serine hydroxymethyltransferase (434 aa).

Residues leucine 133 and 137-139 (GHL) contribute to the (6S)-5,6,7,8-tetrahydrofolate site. At lysine 242 the chain carries N6-(pyridoxal phosphate)lysine.

This sequence belongs to the SHMT family. In terms of assembly, homodimer. Pyridoxal 5'-phosphate is required as a cofactor.

Its subcellular location is the cytoplasm. The catalysed reaction is (6R)-5,10-methylene-5,6,7,8-tetrahydrofolate + glycine + H2O = (6S)-5,6,7,8-tetrahydrofolate + L-serine. Its pathway is one-carbon metabolism; tetrahydrofolate interconversion. It participates in amino-acid biosynthesis; glycine biosynthesis; glycine from L-serine: step 1/1. Functionally, catalyzes the reversible interconversion of serine and glycine with tetrahydrofolate (THF) serving as the one-carbon carrier. This reaction serves as the major source of one-carbon groups required for the biosynthesis of purines, thymidylate, methionine, and other important biomolecules. Also exhibits THF-independent aldolase activity toward beta-hydroxyamino acids, producing glycine and aldehydes, via a retro-aldol mechanism. This chain is Serine hydroxymethyltransferase, found in Methylobacterium radiotolerans (strain ATCC 27329 / DSM 1819 / JCM 2831 / NBRC 15690 / NCIMB 10815 / 0-1).